Consider the following 345-residue polypeptide: tRNA N6-adenosine threonylcarbamoyltransferase (345 aa).

Fe cation contacts are provided by His111 and His115. Residues 134-138 (LVSGG), Asp167, Gly180, Asp184, and Asn278 contribute to the substrate site. A Fe cation-binding site is contributed by Asp306.

The protein belongs to the KAE1 / TsaD family. Requires Fe(2+) as cofactor.

The protein resides in the cytoplasm. It carries out the reaction L-threonylcarbamoyladenylate + adenosine(37) in tRNA = N(6)-L-threonylcarbamoyladenosine(37) in tRNA + AMP + H(+). In terms of biological role, required for the formation of a threonylcarbamoyl group on adenosine at position 37 (t(6)A37) in tRNAs that read codons beginning with adenine. Is involved in the transfer of the threonylcarbamoyl moiety of threonylcarbamoyl-AMP (TC-AMP) to the N6 group of A37, together with TsaE and TsaB. TsaD likely plays a direct catalytic role in this reaction. The chain is tRNA N6-adenosine threonylcarbamoyltransferase from Cyanothece sp. (strain PCC 7425 / ATCC 29141).